Reading from the N-terminus, the 263-residue chain is Pimeloyl-[acyl-carrier protein] methyl ester esterase (263 aa).

Residues Trp-23, 90–91 (SL), and 152–156 (FLTLQ) each bind substrate. Ser-90 serves as the catalytic Nucleophile. Residues Asp-216 and His-244 contribute to the active site. His-244 provides a ligand contact to substrate.

It belongs to the AB hydrolase superfamily. Carboxylesterase BioH family. Monomer.

The protein resides in the cytoplasm. The catalysed reaction is 6-carboxyhexanoyl-[ACP] methyl ester + H2O = 6-carboxyhexanoyl-[ACP] + methanol + H(+). Its pathway is cofactor biosynthesis; biotin biosynthesis. The physiological role of BioH is to remove the methyl group introduced by BioC when the pimeloyl moiety is complete. It allows to synthesize pimeloyl-ACP via the fatty acid synthetic pathway through the hydrolysis of the ester bonds of pimeloyl-ACP esters. The protein is Pimeloyl-[acyl-carrier protein] methyl ester esterase of Nitrosospira multiformis (strain ATCC 25196 / NCIMB 11849 / C 71).